The primary structure comprises 494 residues: Guanosine-5'-triphosphate,3'-diphosphate pyrophosphatase (494 aa).

It belongs to the GppA/Ppx family. GppA subfamily.

The enzyme catalyses guanosine 3'-diphosphate 5'-triphosphate + H2O = guanosine 3',5'-bis(diphosphate) + phosphate + H(+). The protein operates within purine metabolism; ppGpp biosynthesis; ppGpp from GTP: step 2/2. In terms of biological role, catalyzes the conversion of pppGpp to ppGpp. Guanosine pentaphosphate (pppGpp) is a cytoplasmic signaling molecule which together with ppGpp controls the 'stringent response', an adaptive process that allows bacteria to respond to amino acid starvation, resulting in the coordinated regulation of numerous cellular activities. The polypeptide is Guanosine-5'-triphosphate,3'-diphosphate pyrophosphatase (Cronobacter sakazakii (strain ATCC BAA-894) (Enterobacter sakazakii)).